A 797-amino-acid chain; its full sequence is Plakophilin-3 (797 aa).

Positions 56-82 (QLGQQPRHNGAAEPEPEAETARGTSRG) are disordered. Omega-N-methylarginine is present on Arg-81. Ser-123, Ser-180, and Ser-183 each carry phosphoserine. Tyr-195 carries the phosphotyrosine; by SRC modification. Phosphoserine is present on residues Ser-238 and Ser-240. Position 250 is a phosphothreonine (Thr-250). An Omega-N-methylarginine modification is found at Arg-261. A required for interaction with SFN region spans residues 283-288 (SLSLSL). Phosphoserine occurs at positions 285, 313, 314, and 331. Residues 294-724 (LPDVHGFNSY…AEVLVNIIAV (431 aa)) form a required for interaction with GSK3B region. 8 ARM repeats span residues 305 to 348 (SHRT…HKCY), 351 to 390 (AAAK…NLIY), 393 to 432 (ADNK…NLSS), 449 to 487 (TDLV…NLSS), 491 to 536 (ATRQ…NLSY), 596 to 637 (PKGL…NITA), 645 to 684 (VLSR…NLSR), and 689 to 730 (KDEM…NLVV). Residues 516 to 797 (AGKCEDKSVE…GYRKEDFLGP (282 aa)) form a required for binding to PKP2 mRNA region.

This sequence belongs to the beta-catenin family. Found in a complex composed of CDH1, RAP1A and PKP3; PKP3 acts as a scaffold protein within the complex, the complex is required for CDH1 localization to mature desmosome cell junctions. Interacts with FXR1; the interaction facilitates the binding of PKP3 to PKP2 mRNA. Interacts (via ARM repeats) with GSK3B; the interaction may be involved in PKP3 protein degradation. Interacts with hyperphosphorylated and hypophosphorylated RB1; the interaction inhibits RB1 interaction with and repression of the transcription factor E2F1, potentially via sequestering RB1 to the cytoplasm. Interacts with CDKN1A; the interaction sequesters CDKN1A to the cytoplasm thereby repressing its role as an inhibitor of CDK4- and CDK6-driven RB1 phosphorylation. Interacts (via N-terminus) with SFN; the interaction maintains the cytoplasmic pool of PKP3, facilitates PKP3 exchange at desmosomes and restricts PKP3 localization to existing desmosome cell junctions. Interacts (via N-terminus) with JUP; the interaction is required for PKP3 localization to desmosome cell-cell junctions. In terms of processing, phosphorylated at Ser-285 when localized to the cytoplasm, PKP3 at desmosome cell junctions is not phosphorylated. Phosphorylation at Try-195 by SRC is induced by reactive oxygen species and potentially acts as a release mechanism from desmosome cell-cell junctions. Expressed in the epidermis of the skin, in squamous non-cornifying epithelial cells in the vagina, single layer epithelia of the duodenum and pancreas acini and non-epithelial dendritic reticulum cells of lymph node follicles (at protein level). As to expression, expressed in the oral cavity mucosa, epidermis and small intestine epithelium (at protein level). In terms of tissue distribution, expressed in the oral cavity mucosa and epithelial cells of the crypts and villi in the small intestine (at protein level). Expressed in the epidermis with more abundant expression found in the basal and low spinous cells (at protein level).

It is found in the nucleus. Its subcellular location is the cell junction. The protein localises to the desmosome. It localises to the cytoplasm. The protein resides in the cell membrane. It is found in the adherens junction. Its function is as follows. A component of desmosome cell-cell junctions which are required for positive regulation of cellular adhesion. Required for the localization of DSG2, DSP and PKP2 to mature desmosome junctions. May also play a role in the maintenance of DSG3 protein abundance in keratinocytes. Required for the formation of DSP-containing desmosome precursors in the cytoplasm during desmosome assembly. Also regulates the accumulation of CDH1 to mature desmosome junctions, via cAMP-dependent signaling and its interaction with activated RAP1A. Positively regulates the stabilization of PKP2 mRNA and therefore protein abundance, via its interaction with FXR1, may also regulate the protein abundance of DSP via the same mechanism. May also regulate the protein abundance of the desmosome component PKP1. Required for the organization of desmosome junctions at intercellular borders between basal keratinocytes of the epidermis, as a result plays a role in maintenance of the dermal barrier and regulation of the dermal inflammatory response. Required during epidermal keratinocyte differentiation for cell adherence at tricellular cell-cell contacts, via regulation of the timely formation of adherens junctions and desmosomes in a calcium-dependent manner, and may also play a role in the organization of the intracellular actin fiber belt. Acts as a negative regulator of the inflammatory response in hematopoietic cells of the skin and intestine, via modulation of proinflammatory cytokine production. Important for epithelial barrier maintenance in the intestine to reduce intestinal permeability, thereby plays a role in protection from intestinal-derived endotoxemia. Required for the development of hair follicles, via a role in the regulation of inner root sheaf length, correct alignment and anterior-posterior polarity of hair follicles. Promotes proliferation and cell-cycle G1/S phase transition of keratinocytes. Promotes E2F1-driven transcription of G1/S phase promoting genes by acting to release E2F1 from its inhibitory interaction with RB1, via sequestering RB1 and CDKN1A to the cytoplasm and thereby increasing CDK4- and CDK6-driven phosphorylation of RB1. May act as a scaffold protein to facilitate MAPK phosphorylation of RPS6KA protein family members and subsequently promote downstream EGFR signaling. May play a role in the positive regulation of transcription of Wnt-mediated TCF-responsive target genes. This is Plakophilin-3 (PKP3) from Homo sapiens (Human).